A 131-amino-acid polypeptide reads, in one-letter code: Small ribosomal subunit protein uS8 (131 aa).

It belongs to the universal ribosomal protein uS8 family. In terms of assembly, part of the 30S ribosomal subunit. Contacts proteins S5 and S12.

Functionally, one of the primary rRNA binding proteins, it binds directly to 16S rRNA central domain where it helps coordinate assembly of the platform of the 30S subunit. The polypeptide is Small ribosomal subunit protein uS8 (Wolbachia sp. subsp. Brugia malayi (strain TRS)).